Reading from the N-terminus, the 322-residue chain is Peroxidase 66 (322 aa).

Residues 1–24 (MAFSKGLIFAMIFAVLAIVKPSEA) form the signal peptide. 2 cysteine pairs are disulfide-bonded: C35–C114 and C68–C73. The Proton acceptor role is filled by H66. The Ca(2+) site is built by D67, G72, D74, and S76. N155 carries N-linked (GlcNAc...) asparagine glycosylation. Residue P161 coordinates substrate. N166 is a glycosylation site (N-linked (GlcNAc...) asparagine). H191 serves as a coordination point for heme b. T192 lines the Ca(2+) pocket. C198 and C230 are joined by a disulfide. Residue N207 is glycosylated (N-linked (GlcNAc...) asparagine). Positions 245, 247, and 252 each coordinate Ca(2+).

Belongs to the peroxidase family. Classical plant (class III) peroxidase subfamily. Requires heme b as cofactor. Ca(2+) serves as cofactor.

It is found in the secreted. It carries out the reaction 2 a phenolic donor + H2O2 = 2 a phenolic radical donor + 2 H2O. In terms of biological role, removal of H(2)O(2), oxidation of toxic reductants, biosynthesis and degradation of lignin, suberization, auxin catabolism, response to environmental stresses such as wounding, pathogen attack and oxidative stress. These functions might be dependent on each isozyme/isoform in each plant tissue. The sequence is that of Peroxidase 66 (PER66) from Arabidopsis thaliana (Mouse-ear cress).